The chain runs to 372 residues: DSC E3 ubiquitin ligase complex subunit 2 (372 aa).

The next 5 membrane-spanning stretches (helical) occupy residues Val26–Leu46, Ile54–Ile74, Tyr95–Phe115, Thr126–Val146, and Val160–Leu180. Residues Thr246–Tyr314 form a disordered region. The span at Glu249 to Gln268 shows a compositional bias: polar residues. A Phosphoserine modification is found at Ser264. Thr266 carries the post-translational modification Phosphothreonine. The span at Asn269–Ser284 shows a compositional bias: low complexity. The segment covering Arg286 to Leu305 has biased composition (polar residues). The UBA domain maps to Glu332–Gln368.

In terms of assembly, component of the DSC E3 ubiquitin ligase complex composed of dsc1, dsc2, dsc3 and dsc4.

Its subcellular location is the golgi apparatus membrane. The enzyme catalyses S-ubiquitinyl-[E2 ubiquitin-conjugating enzyme]-L-cysteine + [acceptor protein]-L-lysine = [E2 ubiquitin-conjugating enzyme]-L-cysteine + N(6)-ubiquitinyl-[acceptor protein]-L-lysine.. The protein operates within protein modification; protein ubiquitination. Its function is as follows. Component of the DSC E3 ubiquitin ligase complex which is required for the sre1 transcriptional activator proteolytic cleavage to release the soluble transcription factor from the membrane in low oxygen or sterol conditions. The complex also plays an important role in the multivesicular body (MVB) pathway and functions in a post-endoplasmic reticulum pathway for protein degradation. The sequence is that of DSC E3 ubiquitin ligase complex subunit 2 (dsc2) from Schizosaccharomyces pombe (strain 972 / ATCC 24843) (Fission yeast).